The following is a 296-amino-acid chain: NH(3)-dependent NAD(+) synthetase (296 aa).

Residue 30–37 (GVSGGLDS) coordinates ATP. Residue D36 coordinates Mg(2+). R157 provides a ligand contact to deamido-NAD(+). E182 provides a ligand contact to Mg(2+). Residues K190 and D197 each contribute to the deamido-NAD(+) site. The ATP site is built by K206 and S228.

It belongs to the NAD synthetase family. As to quaternary structure, homodimer.

The catalysed reaction is deamido-NAD(+) + NH4(+) + ATP = AMP + diphosphate + NAD(+) + H(+). It participates in cofactor biosynthesis; NAD(+) biosynthesis; NAD(+) from deamido-NAD(+) (ammonia route): step 1/1. In terms of biological role, catalyzes the ATP-dependent amidation of deamido-NAD to form NAD. Uses ammonia as a nitrogen source. The sequence is that of NH(3)-dependent NAD(+) synthetase from Coprothermobacter proteolyticus (strain ATCC 35245 / DSM 5265 / OCM 4 / BT).